A 276-amino-acid polypeptide reads, in one-letter code: Dermonecrotic toxin Ls4SicTox-alphaIII1i (276 aa).

His-3 is a catalytic residue. Positions 23 and 25 each coordinate Mg(2+). The Nucleophile role is filled by His-38. A disulfide bond links Cys-42 and Cys-48. Position 82 (Asp-82) interacts with Mg(2+).

This sequence belongs to the arthropod phospholipase D family. Class I subfamily. Mg(2+) serves as cofactor. As to expression, expressed by the venom gland.

It is found in the secreted. It carries out the reaction an N-(acyl)-sphingosylphosphocholine = an N-(acyl)-sphingosyl-1,3-cyclic phosphate + choline. The catalysed reaction is an N-(acyl)-sphingosylphosphoethanolamine = an N-(acyl)-sphingosyl-1,3-cyclic phosphate + ethanolamine. It catalyses the reaction a 1-acyl-sn-glycero-3-phosphocholine = a 1-acyl-sn-glycero-2,3-cyclic phosphate + choline. The enzyme catalyses a 1-acyl-sn-glycero-3-phosphoethanolamine = a 1-acyl-sn-glycero-2,3-cyclic phosphate + ethanolamine. Dermonecrotic toxins cleave the phosphodiester linkage between the phosphate and headgroup of certain phospholipids (sphingolipid and lysolipid substrates), forming an alcohol (often choline) and a cyclic phosphate. This toxin acts on sphingomyelin (SM). It may also act on ceramide phosphoethanolamine (CPE), lysophosphatidylcholine (LPC) and lysophosphatidylethanolamine (LPE), but not on lysophosphatidylserine (LPS), and lysophosphatidylglycerol (LPG). It acts by transphosphatidylation, releasing exclusively cyclic phosphate products as second products. Induces dermonecrosis, hemolysis, increased vascular permeability, edema, inflammatory response, and platelet aggregation. The sequence is that of Dermonecrotic toxin Ls4SicTox-alphaIII1i from Loxosceles sp. (strain 4 GJB-2008) (Recluse spider).